Consider the following 427-residue polypeptide: Glutamate-1-semialdehyde 2,1-aminomutase (427 aa).

Lys265 bears the N6-(pyridoxal phosphate)lysine mark.

This sequence belongs to the class-III pyridoxal-phosphate-dependent aminotransferase family. HemL subfamily. In terms of assembly, homodimer. Pyridoxal 5'-phosphate serves as cofactor.

It is found in the cytoplasm. The enzyme catalyses (S)-4-amino-5-oxopentanoate = 5-aminolevulinate. It participates in porphyrin-containing compound metabolism; protoporphyrin-IX biosynthesis; 5-aminolevulinate from L-glutamyl-tRNA(Glu): step 2/2. This Idiomarina loihiensis (strain ATCC BAA-735 / DSM 15497 / L2-TR) protein is Glutamate-1-semialdehyde 2,1-aminomutase.